Here is a 385-residue protein sequence, read N- to C-terminus: Homoserine O-succinyltransferase (385 aa).

Residues N46–L355 enclose the AB hydrolase-1 domain. S151 (nucleophile) is an active-site residue. Substrate is bound at residue R221. Residues D318 and H351 contribute to the active site. Residue D352 participates in substrate binding.

It belongs to the AB hydrolase superfamily. MetX family. As to quaternary structure, homodimer.

It localises to the cytoplasm. It catalyses the reaction L-homoserine + succinyl-CoA = O-succinyl-L-homoserine + CoA. It functions in the pathway amino-acid biosynthesis; L-methionine biosynthesis via de novo pathway; O-succinyl-L-homoserine from L-homoserine: step 1/1. Transfers a succinyl group from succinyl-CoA to L-homoserine, forming succinyl-L-homoserine. This Hydrogenovibrio crunogenus (strain DSM 25203 / XCL-2) (Thiomicrospira crunogena) protein is Homoserine O-succinyltransferase.